A 364-amino-acid chain; its full sequence is UDP-N-acetylglucosamine--N-acetylmuramyl-(pentapeptide) pyrophosphoryl-undecaprenol N-acetylglucosamine transferase (364 aa).

UDP-N-acetyl-alpha-D-glucosamine-binding positions include 10-12 (TGG), N124, S195, I250, and Q295.

It belongs to the glycosyltransferase 28 family. MurG subfamily.

The protein resides in the cell membrane. It carries out the reaction di-trans,octa-cis-undecaprenyl diphospho-N-acetyl-alpha-D-muramoyl-L-alanyl-D-glutamyl-meso-2,6-diaminopimeloyl-D-alanyl-D-alanine + UDP-N-acetyl-alpha-D-glucosamine = di-trans,octa-cis-undecaprenyl diphospho-[N-acetyl-alpha-D-glucosaminyl-(1-&gt;4)]-N-acetyl-alpha-D-muramoyl-L-alanyl-D-glutamyl-meso-2,6-diaminopimeloyl-D-alanyl-D-alanine + UDP + H(+). It functions in the pathway cell wall biogenesis; peptidoglycan biosynthesis. Its function is as follows. Cell wall formation. Catalyzes the transfer of a GlcNAc subunit on undecaprenyl-pyrophosphoryl-MurNAc-pentapeptide (lipid intermediate I) to form undecaprenyl-pyrophosphoryl-MurNAc-(pentapeptide)GlcNAc (lipid intermediate II). The sequence is that of UDP-N-acetylglucosamine--N-acetylmuramyl-(pentapeptide) pyrophosphoryl-undecaprenol N-acetylglucosamine transferase from Bacillus cytotoxicus (strain DSM 22905 / CIP 110041 / 391-98 / NVH 391-98).